Here is a 570-residue protein sequence, read N- to C-terminus: Formate--tetrahydrofolate ligase (570 aa).

65–72 (TPLGEGKT) contributes to the ATP binding site.

It belongs to the formate--tetrahydrofolate ligase family.

It carries out the reaction (6S)-5,6,7,8-tetrahydrofolate + formate + ATP = (6R)-10-formyltetrahydrofolate + ADP + phosphate. It participates in one-carbon metabolism; tetrahydrofolate interconversion. This Herpetosiphon aurantiacus (strain ATCC 23779 / DSM 785 / 114-95) protein is Formate--tetrahydrofolate ligase.